The sequence spans 241 residues: MSMLFYTLITVFLIGIQAEPYSDSNVLSGDTIPQAHWTKLQHSLDTALRRAHSAPAAPIAARVAGQTLNITVDPRLFKKRRLHSPRVLFSTQPPPLSTDAQDLDFEVDGAASVNRTHRSKRSSTHPVFHMGEFSVCDSVSVWVADKTTATDIKGKEVTVLAEVNVNNNVFKQYFFETKCRDPSPVDSGCRGIDSKHWNSYCTTTHTFVKALTTANKQAAWRFIRIDTACVCVLNRKAARRG.

An N-terminal signal peptide occupies residues 1-18 (MSMLFYTLITVFLIGIQA). The propeptide occupies 19–121 (EPYSDSNVLS…SVNRTHRSKR (103 aa)). Asn69 and Asn114 each carry an N-linked (GlcNAc...) asparagine glycan. 3 disulfides stabilise this stretch: Cys136/Cys201, Cys179/Cys229, and Cys189/Cys231.

It belongs to the NGF-beta family. As to quaternary structure, homodimer. The homodimer interacts with a single NTRK1 chain. The homodimer interacts with a single NGFR chain. The NGF dimer interacts with a single SORCS2 chain (via extracellular domain). The NGF precursor (proNGF) binds to a receptor complex formed by SORT1 and NGFR, which leads to NGF endocytosis. Both mature NGF and the immature NGF precursor (proNGF) interact with SORCS2 and with the heterodimer formed by SORCS2 and NGFR (via extracellular domains). The NGF precursor (proNGF) has much higher affinity for SORCS2 than mature NGF. The NGF precursor (proNGF) has much higher affinity for SORT1 than mature NGF. Interacts with ADAM10 in a divalent cation-dependent manner. Interacts with SORCS3.

It localises to the secreted. It is found in the endosome lumen. Nerve growth factor is important for the development and maintenance of the sympathetic and sensory nervous systems. Extracellular ligand for the NTRK1 and NGFR receptors, activates cellular signaling cascades through those receptor tyrosine kinase to regulate neuronal proliferation, differentiation and survival. Inhibits metalloproteinase dependent proteolysis of platelet glycoprotein VI. The polypeptide is Beta-nerve growth factor (NGF) (Cavia porcellus (Guinea pig)).